A 227-amino-acid chain; its full sequence is Endo-1,4-beta-xylanase 11A (227 aa).

A signal peptide spans 1-36 (MVSASSLLLAASAIAGVFSAPAAAPVSENLNVLQER). The GH11 domain occupies 37 to 227 (ALTSSATGTS…SSGSASITVS (191 aa)). Positions 112–136 (VYGWTTSPLIEYYIVEDFGTYDPSS) are necrosis inducing domain. Glutamate 122 (nucleophile) is an active-site residue. Glutamate 214 (proton donor) is an active-site residue.

Belongs to the glycosyl hydrolase 11 (cellulase G) family.

Its subcellular location is the secreted. The catalysed reaction is Endohydrolysis of (1-&gt;4)-beta-D-xylosidic linkages in xylans.. It participates in glycan degradation; xylan degradation. With respect to regulation, significantly inhibited by the wheat xylanase inhibiting protein I (XIP-I) and the proteinaceous endoxylanase Triticum aestivum xylanase inhibitors I (TAXI-I), whereas no inhibition is detected with TAXI-II. Its function is as follows. Endo-1,4-beta-xylanase involved in the hydrolysis of xylan, a major structural heterogeneous polysaccharide found in plant biomass representing the second most abundant polysaccharide in the biosphere, after cellulose. Required for plant infection and the appearance of secondary lesions. Is able to induce necrosis on leaves, seedling growth inhibition, induction of a ROS burst, electrolyte leakage, cytoplasm shrinkage, autofluorescence, cell death, and induction of defense genes, and this abilities are independent of the catalytic activity. Only exhibits elicitor activity in certain plants such as tomato, but not in N.benthamiana. This is Endo-1,4-beta-xylanase 11A from Botryotinia fuckeliana (strain B05.10) (Noble rot fungus).